A 148-amino-acid chain; its full sequence is Large ribosomal subunit protein bL9 (148 aa).

Belongs to the bacterial ribosomal protein bL9 family.

In terms of biological role, binds to the 23S rRNA. The sequence is that of Large ribosomal subunit protein bL9 from Agathobacter rectalis (strain ATCC 33656 / DSM 3377 / JCM 17463 / KCTC 5835 / VPI 0990) (Eubacterium rectale).